The primary structure comprises 305 residues: Oxygen-dependent coproporphyrinogen-III oxidase (305 aa).

S98 contributes to the substrate binding site. Residues H102 and H112 each contribute to the a divalent metal cation site. H112 acts as the Proton donor in catalysis. Position 114 to 116 (114 to 116 (NVR)) interacts with substrate. 2 residues coordinate a divalent metal cation: H151 and H181. An important for dimerization region spans residues 246–281 (YVEFNLVYDRGTLFGLQSGGRTESILMSMPPLARWE). 264–266 (GGR) is a binding site for substrate.

It belongs to the aerobic coproporphyrinogen-III oxidase family. As to quaternary structure, homodimer. The cofactor is a divalent metal cation.

It is found in the cytoplasm. The enzyme catalyses coproporphyrinogen III + O2 + 2 H(+) = protoporphyrinogen IX + 2 CO2 + 2 H2O. It participates in porphyrin-containing compound metabolism; protoporphyrin-IX biosynthesis; protoporphyrinogen-IX from coproporphyrinogen-III (O2 route): step 1/1. Its function is as follows. Involved in the heme biosynthesis. Catalyzes the aerobic oxidative decarboxylation of propionate groups of rings A and B of coproporphyrinogen-III to yield the vinyl groups in protoporphyrinogen-IX. The polypeptide is Oxygen-dependent coproporphyrinogen-III oxidase (Vibrio parahaemolyticus serotype O3:K6 (strain RIMD 2210633)).